Consider the following 377-residue polypeptide: MQAKTVTIKLDKHCYDIIIGPDLIAQAALQIKHSLKQKNFHQMRLAIVTDTNVASLHLDALQAELTKNKIHTFPIIVKAGEQSKSFSTLQVVIDQILAARLERGDCVIAFGGGVIGDLAGFAASMIRRGMNFIQMPTTLLAQIDSSVGGKTGINSRHGKNLIGAFYQPQCVIADTSVLDTLPPREFRAGYAEMVKYGLINQPDFFEWLEKNGQKIFSNGAIRIEAIVRSCQFKATIVARDEYETGERALLNLGHTFGHMLETATAYDSKRLIHGESVAIGMILAHQFSAQLNLVAPTLINRIETHLKAVGLPTQLKDIPGDLPNAETLMALIAQDKKVSQNNLTFILSRGLGQSFIAKNVPPDLVLSFLEQKLTEIR.

NAD(+) contacts are provided by residues 113 to 117, 137 to 138, K150, and K159; these read GVIGD and TT. Residues E192, H254, and H273 each contribute to the Zn(2+) site.

It belongs to the sugar phosphate cyclases superfamily. Dehydroquinate synthase family. Requires Co(2+) as cofactor. The cofactor is Zn(2+). It depends on NAD(+) as a cofactor.

The protein resides in the cytoplasm. The catalysed reaction is 7-phospho-2-dehydro-3-deoxy-D-arabino-heptonate = 3-dehydroquinate + phosphate. It functions in the pathway metabolic intermediate biosynthesis; chorismate biosynthesis; chorismate from D-erythrose 4-phosphate and phosphoenolpyruvate: step 2/7. Functionally, catalyzes the conversion of 3-deoxy-D-arabino-heptulosonate 7-phosphate (DAHP) to dehydroquinate (DHQ). This Bartonella tribocorum (strain CIP 105476 / IBS 506) protein is 3-dehydroquinate synthase.